We begin with the raw amino-acid sequence, 349 residues long: 4-hydroxythreonine-4-phosphate dehydrogenase (349 aa).

Residue Thr-135 coordinates substrate. 3 residues coordinate a divalent metal cation: His-170, His-215, and His-276. Substrate contacts are provided by Lys-284, Asn-293, and Arg-302.

This sequence belongs to the PdxA family. As to quaternary structure, homodimer. Requires a divalent metal cation as cofactor.

It is found in the cytoplasm. It catalyses the reaction 4-(phosphooxy)-L-threonine + NAD(+) = 3-amino-2-oxopropyl phosphate + CO2 + NADH. Its pathway is cofactor biosynthesis; pyridoxine 5'-phosphate biosynthesis; pyridoxine 5'-phosphate from D-erythrose 4-phosphate: step 4/5. Its function is as follows. Catalyzes the NAD(P)-dependent oxidation of 4-(phosphooxy)-L-threonine (HTP) into 2-amino-3-oxo-4-(phosphooxy)butyric acid which spontaneously decarboxylates to form 3-amino-2-oxopropyl phosphate (AHAP). This chain is 4-hydroxythreonine-4-phosphate dehydrogenase, found in Synechococcus sp. (strain JA-3-3Ab) (Cyanobacteria bacterium Yellowstone A-Prime).